The chain runs to 153 residues: Large ribosomal subunit protein uL22 (153 aa).

The protein belongs to the universal ribosomal protein uL22 family. Part of the 50S ribosomal subunit.

Its function is as follows. This protein binds specifically to 23S rRNA. It makes multiple contacts with different domains of the 23S rRNA in the assembled 50S subunit and ribosome. Functionally, the globular domain of the protein is located near the polypeptide exit tunnel on the outside of the subunit, while an extended beta-hairpin is found that lines the wall of the exit tunnel in the center of the 70S ribosome. This chain is Large ribosomal subunit protein uL22, found in Methanocella arvoryzae (strain DSM 22066 / NBRC 105507 / MRE50).